The following is a 167-amino-acid chain: Transcriptional repressor NrdR (167 aa).

The segment at 3 to 34 is a zinc-finger region; that stretch reads CPFCRNPDSRVVDSRMADDGSAIRRRRQCPEC. The ATP-cone domain maps to 46 to 136; it reads LSVIKRSGVG…VYQAFESLED (91 aa). The disordered stretch occupies residues 148–167; that stretch reads AQEDAAERPATPRKPEKTSL.

The protein belongs to the NrdR family. It depends on Zn(2+) as a cofactor.

Functionally, negatively regulates transcription of bacterial ribonucleotide reductase nrd genes and operons by binding to NrdR-boxes. In Pseudarthrobacter chlorophenolicus (strain ATCC 700700 / DSM 12829 / CIP 107037 / JCM 12360 / KCTC 9906 / NCIMB 13794 / A6) (Arthrobacter chlorophenolicus), this protein is Transcriptional repressor NrdR.